The chain runs to 206 residues: Ribosomal RNA small subunit methyltransferase G (206 aa).

S-adenosyl-L-methionine contacts are provided by residues Gly74, Leu79, 125 to 126 (VE), and Arg140.

The protein belongs to the methyltransferase superfamily. RNA methyltransferase RsmG family.

The protein localises to the cytoplasm. It catalyses the reaction guanosine(527) in 16S rRNA + S-adenosyl-L-methionine = N(7)-methylguanosine(527) in 16S rRNA + S-adenosyl-L-homocysteine. Specifically methylates the N7 position of guanine in position 527 of 16S rRNA. This is Ribosomal RNA small subunit methyltransferase G from Shewanella oneidensis (strain ATCC 700550 / JCM 31522 / CIP 106686 / LMG 19005 / NCIMB 14063 / MR-1).